Here is a 157-residue protein sequence, read N- to C-terminus: tRNA (cytidine(34)-2'-O)-methyltransferase (157 aa).

S-adenosyl-L-methionine-binding residues include leucine 78, glycine 100, isoleucine 122, and serine 130.

The protein belongs to the class IV-like SAM-binding methyltransferase superfamily. RNA methyltransferase TrmH family. TrmL subfamily. Homodimer.

It localises to the cytoplasm. It catalyses the reaction cytidine(34) in tRNA + S-adenosyl-L-methionine = 2'-O-methylcytidine(34) in tRNA + S-adenosyl-L-homocysteine + H(+). It carries out the reaction 5-carboxymethylaminomethyluridine(34) in tRNA(Leu) + S-adenosyl-L-methionine = 5-carboxymethylaminomethyl-2'-O-methyluridine(34) in tRNA(Leu) + S-adenosyl-L-homocysteine + H(+). Its function is as follows. Methylates the ribose at the nucleotide 34 wobble position in the two leucyl isoacceptors tRNA(Leu)(CmAA) and tRNA(Leu)(cmnm5UmAA). Catalyzes the methyl transfer from S-adenosyl-L-methionine to the 2'-OH of the wobble nucleotide. This is tRNA (cytidine(34)-2'-O)-methyltransferase from Escherichia coli O6:H1 (strain CFT073 / ATCC 700928 / UPEC).